The primary structure comprises 459 residues: uncharacterized protein (459 aa).

A run of 12 helical transmembrane segments spans residues 25–45 (SYGF…IYLL), 52–72 (AGIP…FAAI), 95–115 (PYLL…FLSP), 123–143 (LIYA…VNIP), 167–187 (IGSL…LVKF), 192–212 (VGYP…FYIC), 249–269 (VLMT…LVYF), 279–299 (LMAY…VFLP), 310–330 (TAMI…MLPS), 332–352 (VYVF…PNGI), 389–409 (SLSG…PNAV), and 420–440 (ALLL…IGFL).

Belongs to the sodium:galactoside symporter (TC 2.A.2) family.

The protein localises to the cell membrane. This is an uncharacterized protein from Bacillus subtilis (strain 168).